Here is a 149-residue protein sequence, read N- to C-terminus: Putative pre-16S rRNA nuclease (149 aa).

This sequence belongs to the YqgF nuclease family.

The protein resides in the cytoplasm. Functionally, could be a nuclease involved in processing of the 5'-end of pre-16S rRNA. The chain is Putative pre-16S rRNA nuclease from Burkholderia orbicola (strain MC0-3).